The primary structure comprises 494 residues: ATP synthase subunit beta, plastid (494 aa).

Residue 169–176 (GGAGVGKT) participates in ATP binding.

The protein belongs to the ATPase alpha/beta chains family. In terms of assembly, F-type ATPases have 2 components, CF(1) - the catalytic core - and CF(0) - the membrane proton channel. CF(1) has five subunits: alpha(3), beta(3), gamma(1), delta(1), epsilon(1). CF(0) has four main subunits: a(1), b(1), b'(1) and c(9-12).

The protein resides in the plastid thylakoid membrane. It catalyses the reaction ATP + H2O + 4 H(+)(in) = ADP + phosphate + 5 H(+)(out). In terms of biological role, produces ATP from ADP in the presence of a proton gradient across the membrane. The catalytic sites are hosted primarily by the beta subunits. In Cuscuta gronovii (Common dodder), this protein is ATP synthase subunit beta, plastid (atpB).